The chain runs to 429 residues: Adenylosuccinate synthetase (429 aa).

GTP contacts are provided by residues 12 to 18 (GDEGKGK) and 40 to 42 (GHT). Aspartate 13 functions as the Proton acceptor in the catalytic mechanism. Mg(2+) contacts are provided by aspartate 13 and glycine 40. IMP is bound by residues 13-16 (DEGK), 38-41 (NAGH), threonine 129, arginine 143, glutamine 223, threonine 238, and arginine 302. Residue histidine 41 is the Proton donor of the active site. 298–304 (VVTGRKR) serves as a coordination point for substrate. GTP contacts are provided by residues arginine 304, 330–332 (KLD), and 412–414 (STS).

It belongs to the adenylosuccinate synthetase family. As to quaternary structure, homodimer. Mg(2+) is required as a cofactor.

The protein localises to the cytoplasm. It carries out the reaction IMP + L-aspartate + GTP = N(6)-(1,2-dicarboxyethyl)-AMP + GDP + phosphate + 2 H(+). It participates in purine metabolism; AMP biosynthesis via de novo pathway; AMP from IMP: step 1/2. In terms of biological role, plays an important role in the de novo pathway of purine nucleotide biosynthesis. Catalyzes the first committed step in the biosynthesis of AMP from IMP. The sequence is that of Adenylosuccinate synthetase from Brucella anthropi (strain ATCC 49188 / DSM 6882 / CCUG 24695 / JCM 21032 / LMG 3331 / NBRC 15819 / NCTC 12168 / Alc 37) (Ochrobactrum anthropi).